The primary structure comprises 476 residues: Glycogen synthase (476 aa).

Lysine 15 provides a ligand contact to ADP-alpha-D-glucose.

The protein belongs to the glycosyltransferase 1 family. Bacterial/plant glycogen synthase subfamily.

It catalyses the reaction [(1-&gt;4)-alpha-D-glucosyl](n) + ADP-alpha-D-glucose = [(1-&gt;4)-alpha-D-glucosyl](n+1) + ADP + H(+). It functions in the pathway glycan biosynthesis; glycogen biosynthesis. Its function is as follows. Synthesizes alpha-1,4-glucan chains using ADP-glucose. The protein is Glycogen synthase of Streptococcus gordonii (strain Challis / ATCC 35105 / BCRC 15272 / CH1 / DL1 / V288).